The following is a 659-amino-acid chain: tRNA uridine 5-carboxymethylaminomethyl modification enzyme MnmG (659 aa).

Residue 13-18 participates in FAD binding; it reads GGGHAG. 281 to 295 contributes to the NAD(+) binding site; that stretch reads GPRYCPSVEDKINRF.

The protein belongs to the MnmG family. As to quaternary structure, homodimer. Heterotetramer of two MnmE and two MnmG subunits. The cofactor is FAD.

The protein resides in the cytoplasm. Functionally, NAD-binding protein involved in the addition of a carboxymethylaminomethyl (cmnm) group at the wobble position (U34) of certain tRNAs, forming tRNA-cmnm(5)s(2)U34. This chain is tRNA uridine 5-carboxymethylaminomethyl modification enzyme MnmG, found in Delftia acidovorans (strain DSM 14801 / SPH-1).